A 371-amino-acid chain; its full sequence is Homoserine O-acetyltransferase (371 aa).

Residues 44–350 enclose the AB hydrolase-1 domain; it reads NAILVEHAWT…SYGHDAFLLE (307 aa). Serine 150 acts as the Nucleophile in catalysis. Position 217 (arginine 217) interacts with substrate. Active-site residues include aspartate 311 and histidine 344. Position 345 (aspartate 345) interacts with substrate.

The protein belongs to the AB hydrolase superfamily. MetX family. In terms of assembly, homodimer.

The protein resides in the cytoplasm. It carries out the reaction L-homoserine + acetyl-CoA = O-acetyl-L-homoserine + CoA. The protein operates within amino-acid biosynthesis; L-methionine biosynthesis via de novo pathway; O-acetyl-L-homoserine from L-homoserine: step 1/1. In terms of biological role, transfers an acetyl group from acetyl-CoA to L-homoserine, forming acetyl-L-homoserine. The sequence is that of Homoserine O-acetyltransferase from Pelobacter propionicus (strain DSM 2379 / NBRC 103807 / OttBd1).